The chain runs to 145 residues: ATP synthase epsilon chain (145 aa).

The protein belongs to the ATPase epsilon chain family. In terms of assembly, F-type ATPases have 2 components, CF(1) - the catalytic core - and CF(0) - the membrane proton channel. CF(1) has five subunits: alpha(3), beta(3), gamma(1), delta(1), epsilon(1). CF(0) has three main subunits: a, b and c.

The protein resides in the cell inner membrane. Its function is as follows. Produces ATP from ADP in the presence of a proton gradient across the membrane. The polypeptide is ATP synthase epsilon chain (Francisella tularensis subsp. mediasiatica (strain FSC147)).